A 647-amino-acid polypeptide reads, in one-letter code: Threonine--tRNA ligase (647 aa).

Positions 1–63 (MADISIKFPD…ASDGSIEIVT (63 aa)) constitute a TGS domain. The interval 242–540 (DHRVIGNQLD…LTEIYKGAFP (299 aa)) is catalytic. Zn(2+) is bound by residues Cys-336, His-387, and His-517.

This sequence belongs to the class-II aminoacyl-tRNA synthetase family. As to quaternary structure, homodimer. Requires Zn(2+) as cofactor.

It localises to the cytoplasm. It catalyses the reaction tRNA(Thr) + L-threonine + ATP = L-threonyl-tRNA(Thr) + AMP + diphosphate + H(+). Catalyzes the attachment of threonine to tRNA(Thr) in a two-step reaction: L-threonine is first activated by ATP to form Thr-AMP and then transferred to the acceptor end of tRNA(Thr). Also edits incorrectly charged L-seryl-tRNA(Thr). The protein is Threonine--tRNA ligase of Levilactobacillus brevis (strain ATCC 367 / BCRC 12310 / CIP 105137 / JCM 1170 / LMG 11437 / NCIMB 947 / NCTC 947) (Lactobacillus brevis).